Reading from the N-terminus, the 388-residue chain is Sporulation-specific mitogen-activated protein kinase SMK1 (388 aa).

In terms of domain architecture, Protein kinase spans 38 to 337; that stretch reads YEIIQFLGKG…VEQAISHPFL (300 aa). Residues 44–52 and Lys69 contribute to the ATP site; that span reads LGKGAYGTV. The Proton acceptor role is filled by Asp166. The TXY motif lies at 207–209; that stretch reads TNY.

This sequence belongs to the protein kinase superfamily. CMGC Ser/Thr protein kinase family. MAP kinase subfamily. As to quaternary structure, interacts with GSC2. It depends on Mg(2+) as a cofactor. In terms of processing, dually phosphorylated on Thr-207 and Tyr-209, which activates the enzyme.

It carries out the reaction L-seryl-[protein] + ATP = O-phospho-L-seryl-[protein] + ADP + H(+). It catalyses the reaction L-threonyl-[protein] + ATP = O-phospho-L-threonyl-[protein] + ADP + H(+). Its activity is regulated as follows. Activated by tyrosine and threonine phosphorylation. Required for spore wall assembly. Required for proper deposition of the two outer layers of the spore wall, the chitosan and dityrosine layers. Negatively regulates GSC2, an alternate catalytic subunit of the 1,3-beta-glucan synthase (GS). Participates in a developmentally regulated signal transduction pathway that coordinates cytodifferentiation events with the transcriptional program. In Saccharomyces cerevisiae (strain ATCC 204508 / S288c) (Baker's yeast), this protein is Sporulation-specific mitogen-activated protein kinase SMK1 (SMK1).